Consider the following 156-residue polypeptide: UPF0225 protein PFLU_1319 (156 aa).

This sequence belongs to the UPF0225 family.

The polypeptide is UPF0225 protein PFLU_1319 (Pseudomonas fluorescens (strain SBW25)).